A 289-amino-acid chain; its full sequence is MYG1 protein TC_0665 (289 aa).

Belongs to the MYG1 family.

This chain is MYG1 protein TC_0665, found in Chlamydia muridarum (strain MoPn / Nigg).